The primary structure comprises 257 residues: MSDIYQHFRKDERAFIDQALEWKRIVQEQYRMKLTDFLDPREQVILSAVTGQADVGLAFSGGYDRAERKRAILFPEYITPEESDFELQAFNVRYADKFVSVDHRSLLGALMGIGLKRQKFGDIVFSETAVQLIVSADTADFVAAQLTQAGKAAVSLEKIDLSDLNIPAVDVEIRDDTVSSLRLDAVCASMSRQSRQKSQTLVKNGLVKVNWKVVEDPSYIVAEGDMLSIRGFGRCSLTKIEGKTKKDKWRVTFERQK.

Positions 1–74 (MSDIYQHFRK…RAERKRAILF (74 aa)) are N-terminal domain. A central region region spans residues 87 to 166 (LQAFNVRYAD…EKIDLSDLNI (80 aa)). The region spanning 181 to 251 (LRLDAVCASM…GKTKKDKWRV (71 aa)) is the S4 RNA-binding domain.

In terms of assembly, in the presence of chloramphenicol (a translation elongation inhibitor), but not erythromycin or lincomycin, associates with 50S ribosomal subunits with or without a tRNA in the P-site. The S4 domain binds in a similar position to RqcP.

It localises to the cytoplasm. Its function is as follows. Part of the ribosome quality control system (RQC), a ribosome-associated complex that mediates the extraction of incompletely synthesized nascent chains from stalled ribosomes and their subsequent degradation. RqcH recruits Ala-charged tRNA, and with RqcP directs the elongation of stalled nascent chains on 50S ribosomal subunits, leading to non-templated C-terminal alanine extensions (Ala tail). The Ala tail promotes nascent chain degradation. RqcP2 (YlmH) overexpression can compensate for RqcP's role in Ala tailing during RQC, restoring Ala tail addition to peptides in stalled ribosomes. Overexpression complements a double ssrA-rqcP double deletion, but not an ssrA-rqcH double deletion. The majority of tagged protein is associated with tRNA-less 50S subunits, suggesting it might also play a role in late stage 50S subunit biogenesis. This Bacillus subtilis (strain 168) protein is Ribosome-associated protein quality control protein P2.